A 547-amino-acid polypeptide reads, in one-letter code: 2-succinyl-5-enolpyruvyl-6-hydroxy-3-cyclohexene-1-carboxylate synthase (547 aa).

It belongs to the TPP enzyme family. MenD subfamily. Homodimer. Mg(2+) is required as a cofactor. The cofactor is Mn(2+). It depends on thiamine diphosphate as a cofactor.

The enzyme catalyses isochorismate + 2-oxoglutarate + H(+) = 5-enolpyruvoyl-6-hydroxy-2-succinyl-cyclohex-3-ene-1-carboxylate + CO2. It functions in the pathway quinol/quinone metabolism; 1,4-dihydroxy-2-naphthoate biosynthesis; 1,4-dihydroxy-2-naphthoate from chorismate: step 2/7. It participates in quinol/quinone metabolism; menaquinone biosynthesis. Functionally, catalyzes the thiamine diphosphate-dependent decarboxylation of 2-oxoglutarate and the subsequent addition of the resulting succinic semialdehyde-thiamine pyrophosphate anion to isochorismate to yield 2-succinyl-5-enolpyruvyl-6-hydroxy-3-cyclohexene-1-carboxylate (SEPHCHC). The polypeptide is 2-succinyl-5-enolpyruvyl-6-hydroxy-3-cyclohexene-1-carboxylate synthase (Mycobacterium sp. (strain JLS)).